The following is a 368-amino-acid chain: Biotin synthase (368 aa).

Positions 74-309 constitute a Radical SAM core domain; sequence CCGNVVDLCS…QQILRYAGGR (236 aa). Positions 92, 96, and 99 each coordinate [4Fe-4S] cluster. [2Fe-2S] cluster is bound by residues C137, C174, C234, and R304.

It belongs to the radical SAM superfamily. Biotin synthase family. Homodimer. Requires [4Fe-4S] cluster as cofactor. The cofactor is [2Fe-2S] cluster.

It carries out the reaction (4R,5S)-dethiobiotin + (sulfur carrier)-SH + 2 reduced [2Fe-2S]-[ferredoxin] + 2 S-adenosyl-L-methionine = (sulfur carrier)-H + biotin + 2 5'-deoxyadenosine + 2 L-methionine + 2 oxidized [2Fe-2S]-[ferredoxin]. It participates in cofactor biosynthesis; biotin biosynthesis; biotin from 7,8-diaminononanoate: step 2/2. Its function is as follows. Catalyzes the conversion of dethiobiotin (DTB) to biotin by the insertion of a sulfur atom into dethiobiotin via a radical-based mechanism. This is Biotin synthase from Rippkaea orientalis (strain PCC 8801 / RF-1) (Cyanothece sp. (strain PCC 8801)).